The sequence spans 394 residues: Elongation factor Tu (394 aa).

Positions 10–204 (KPHVNVGTIG…HLDSYIPEPE (195 aa)) constitute a tr-type G domain. Positions 19 to 26 (GHVDHGKT) are G1. 19–26 (GHVDHGKT) contributes to the GTP binding site. Threonine 26 is a Mg(2+) binding site. The segment at 60–64 (GITIN) is G2. The interval 81 to 84 (DCPG) is G3. GTP is bound by residues 81–85 (DCPGH) and 136–139 (NKCD). A G4 region spans residues 136 to 139 (NKCD). Residues 174 to 176 (SAL) form a G5 region.

It belongs to the TRAFAC class translation factor GTPase superfamily. Classic translation factor GTPase family. EF-Tu/EF-1A subfamily. Monomer.

The protein resides in the cytoplasm. The enzyme catalyses GTP + H2O = GDP + phosphate + H(+). Its function is as follows. GTP hydrolase that promotes the GTP-dependent binding of aminoacyl-tRNA to the A-site of ribosomes during protein biosynthesis. The sequence is that of Elongation factor Tu from Haemophilus ducreyi (strain 35000HP / ATCC 700724).